A 535-amino-acid chain; its full sequence is MELDLSPTHLSSSPEDVCPTPATPPETPPPPDNPPPGDVKRSQPLPIPSSRKLREEEFQATSLPSIPNPFPELCSPPSQKPILGGSSGARGLLPRDSSRLCVVKVYSEDGACRSVEVAAGATARHVCEMLVQRAHALSDESWGLVESHPYLALERGLEDHEFVVEVQEAWPVGGDSRFIFRKNFAKYELFKSPPHTLFPEKMVSSCLDAQTGISHEDLIQNFLNAGSFPEIQGFLQLRGSGRGSGRKLWKRFFCFLRRSGLYYSTKGTSKDPRHLQYVADVNESNVYVVTQGRKLYGMPTDFGFCVKPNKLRNGHKGLHIFCSEDEQSRTCWLAAFRLFKYGVQLYKNYQQAQSRHLRLSYLGSPPLRSVSDNTLVAMDFSGHAGRVIDNPREALSAAMEEAQAWRKKTNHRLSLPTTCSGSSLSAAIHRTQPWFHGRISREESQRLIGQQGLVDGVFLVRESQRNPQGFVLSLCHLQKVKHYLILPSEDEGCLYFSMDEGQTRFTDLLQLVEFHQLNRGILPCLLRHCCARVAL.

The segment at 1-90 (MELDLSPTHL…PILGGSSGAR (90 aa)) is disordered. The span at 21–37 (PATPPETPPPPDNPPPG) shows a compositional bias: pro residues. A Ras-associating domain is found at 99 to 185 (RLCVVKVYSE…SRFIFRKNFA (87 aa)). Phosphotyrosine; by FAK1 occurs at positions 187 and 341. The region spanning 228-341 (FPEIQGFLQL…WLAAFRLFKY (114 aa)) is the PH domain. S364 is subject to Phosphoserine. One can recognise an SH2 domain in the interval 434–530 (WFHGRISREE…ILPCLLRHCC (97 aa)).

This sequence belongs to the GRB7/10/14 family. As to quaternary structure, homodimer. Interacts (via SH2 domain) with EGFR, ERBB2, ERBB3 (when phosphorylated), ERBB4 (when phosphorylated), EPHB1, INSR, FGFR1, PDGFRA (tyrosine phosphorylated) and PDGFRB (tyrosine phosphorylated). Interacts with SHC1. Interacts with RND1. Interacts (when tyrosine phosphorylated) with FHL2 and HAX1. Interacts (via SH2 domain) with RET and PTK2/FAK1. Interacts (when not phosphorylated) with ELAVL1. In stressed cells, but not in normal cells, part of a complex that contains at least GRB7, PTK2/FAK1, STAU1, ELAVL1 and TIA1. Interacts (via SH2 domain) with KIT (phosphorylated). Interacts (via SH2 domain) with TEK/TIE2 (tyrosine phosphorylated). Phosphorylated on serine and threonine residues in response to activation of receptor kinases. Phosphorylated on tyrosine residues by TEK/TIE2. Phosphorylated on tyrosine residues by PTK2/FAK1, and possibly also other kinases. Phosphorylation is enhanced by activation of receptor kinases. Tyrosine phosphorylation is essential for activation of down-stream protein kinases. Phosphorylated on tyrosine residues in response to NTN1 signaling. Phosphorylation promotes stress granule disassembly during recovery after cellular stress.

Its subcellular location is the cytoplasm. It is found in the cell projection. The protein localises to the cell junction. The protein resides in the focal adhesion. It localises to the cell membrane. Its subcellular location is the cytoplasmic granule. Adapter protein that interacts with the cytoplasmic domain of numerous receptor kinases and modulates down-stream signaling. Promotes activation of down-stream protein kinases, including STAT3, AKT1, MAPK1 and/or MAPK3. Promotes activation of HRAS. Plays a role in signal transduction in response to EGF. Plays a role in the regulation of cell proliferation and cell migration. Plays a role in the assembly and stability of RNA stress granules. Binds to the 5'UTR of target mRNA molecules and represses translation of target mRNA species, when not phosphorylated. Phosphorylation impairs RNA binding and promotes stress granule disassembly during recovery after cellular stress. This chain is Growth factor receptor-bound protein 7 (Grb7), found in Mus musculus (Mouse).